Here is a 126-residue protein sequence, read N- to C-terminus: MLIGVGTDIVQILRIEKILHLYPELFAKRILASKELRQFALLNKTSHATFLAKRFAAKEAVSKAFGIGIGQGINFKDITILNDDLGKPIVEVSASYTKKYSSFNIHLSLSDDYPVCVAFAIVESSC.

Mg(2+) is bound by residues D8 and E59.

Belongs to the P-Pant transferase superfamily. AcpS family. It depends on Mg(2+) as a cofactor.

The protein resides in the cytoplasm. It catalyses the reaction apo-[ACP] + CoA = holo-[ACP] + adenosine 3',5'-bisphosphate + H(+). Functionally, transfers the 4'-phosphopantetheine moiety from coenzyme A to a Ser of acyl-carrier-protein. The protein is Holo-[acyl-carrier-protein] synthase of Rickettsia akari (strain Hartford).